Reading from the N-terminus, the 33-residue chain is Photosystem II reaction center protein Psb30 (33 aa).

The chain crosses the membrane as a helical span at residues 5-25 (VVAQLTVLALIVVSGPLVIGL).

It belongs to the Psb30/Ycf12 family. PSII is composed of 1 copy each of membrane proteins PsbA, PsbB, PsbC, PsbD, PsbE, PsbF, PsbH, PsbI, PsbJ, PsbK, PsbL, PsbM, PsbT, PsbX, PsbY, PsbZ, Psb30/Ycf12, peripheral proteins of the oxygen-evolving complex and a large number of cofactors. It forms dimeric complexes.

Its subcellular location is the plastid. The protein localises to the chloroplast thylakoid membrane. A core subunit of photosystem II (PSII), probably helps stabilize the reaction center. The sequence is that of Photosystem II reaction center protein Psb30 from Zygnema circumcarinatum (Green alga).